A 447-amino-acid polypeptide reads, in one-letter code: CBL-interacting serine/threonine-protein kinase 9 (447 aa).

The Protein kinase domain occupies 19–274 (YEMGRTLGEG…IAELLEDEWF (256 aa)). ATP-binding positions include 25–33 (LGEGSFAKV) and lysine 48. Aspartate 142 functions as the Proton acceptor in the catalytic mechanism. The tract at residues 160–189 (DFGLSAFSRQVREDGLLHTACGTPNYVAPE) is activation loop. Serine 164 carries the phosphoserine modification. Threonine 178 carries the phosphothreonine modification. The region spanning 312-336 (EKPVSMNAFELISSSSEFSLENLFE) is the NAF domain. Residues 343–372 (KKETRFTSQRSASEIMSKMEETAKPLGFNV) are PPI.

It belongs to the protein kinase superfamily. CAMK Ser/Thr protein kinase family. SNF1 subfamily. Interacts with CBL2 and CBL3. Mn(2+) serves as cofactor. Expressed at low levels in roots and shoots. Detected in root vascular bundles and in the leaf vascular tissue and hydathode, but not in root tips.

The protein resides in the cytoplasm. The protein localises to the nucleus. The enzyme catalyses L-seryl-[protein] + ATP = O-phospho-L-seryl-[protein] + ADP + H(+). It catalyses the reaction L-threonyl-[protein] + ATP = O-phospho-L-threonyl-[protein] + ADP + H(+). In terms of biological role, CIPK serine-threonine protein kinases interact with CBL proteins. Binding of a CBL protein to the regulatory NAF domain of CIPK protein lead to the activation of the kinase in a calcium-dependent manner. Involved in K(+) homeostasis under low-K(+) stress. The sequence is that of CBL-interacting serine/threonine-protein kinase 9 (CIPK9) from Arabidopsis thaliana (Mouse-ear cress).